The sequence spans 361 residues: Histidinol-phosphate aminotransferase (361 aa).

K219 is modified (N6-(pyridoxal phosphate)lysine).

It belongs to the class-II pyridoxal-phosphate-dependent aminotransferase family. Histidinol-phosphate aminotransferase subfamily. As to quaternary structure, homodimer. It depends on pyridoxal 5'-phosphate as a cofactor.

It catalyses the reaction L-histidinol phosphate + 2-oxoglutarate = 3-(imidazol-4-yl)-2-oxopropyl phosphate + L-glutamate. The protein operates within amino-acid biosynthesis; L-histidine biosynthesis; L-histidine from 5-phospho-alpha-D-ribose 1-diphosphate: step 7/9. This Cereibacter sphaeroides (strain KD131 / KCTC 12085) (Rhodobacter sphaeroides) protein is Histidinol-phosphate aminotransferase.